A 445-amino-acid chain; its full sequence is Phosphoglucosamine mutase (445 aa).

Serine 100 serves as the catalytic Phosphoserine intermediate. Mg(2+) is bound by residues serine 100, aspartate 240, aspartate 242, and aspartate 244. Serine 100 carries the post-translational modification Phosphoserine.

It belongs to the phosphohexose mutase family. Mg(2+) is required as a cofactor. Activated by phosphorylation.

It carries out the reaction alpha-D-glucosamine 1-phosphate = D-glucosamine 6-phosphate. Its function is as follows. Catalyzes the conversion of glucosamine-6-phosphate to glucosamine-1-phosphate. The polypeptide is Phosphoglucosamine mutase (Pelotomaculum thermopropionicum (strain DSM 13744 / JCM 10971 / SI)).